The following is a 185-amino-acid chain: Peptidyl-tRNA hydrolase (185 aa).

Residue Tyr-14 participates in tRNA binding. The active-site Proton acceptor is the His-19. Positions 64, 66, and 112 each coordinate tRNA.

The protein belongs to the PTH family. Monomer.

The protein localises to the cytoplasm. It catalyses the reaction an N-acyl-L-alpha-aminoacyl-tRNA + H2O = an N-acyl-L-amino acid + a tRNA + H(+). Hydrolyzes ribosome-free peptidyl-tRNAs (with 1 or more amino acids incorporated), which drop off the ribosome during protein synthesis, or as a result of ribosome stalling. In terms of biological role, catalyzes the release of premature peptidyl moieties from peptidyl-tRNA molecules trapped in stalled 50S ribosomal subunits, and thus maintains levels of free tRNAs and 50S ribosomes. The sequence is that of Peptidyl-tRNA hydrolase from Latilactobacillus sakei subsp. sakei (strain 23K) (Lactobacillus sakei subsp. sakei).